Here is an 859-residue protein sequence, read N- to C-terminus: DNA mismatch repair protein MutS (859 aa).

618–625 (GPNMGGKS) lines the ATP pocket.

The protein belongs to the DNA mismatch repair MutS family.

Its function is as follows. This protein is involved in the repair of mismatches in DNA. It is possible that it carries out the mismatch recognition step. This protein has a weak ATPase activity. This is DNA mismatch repair protein MutS from Shewanella sediminis (strain HAW-EB3).